The primary structure comprises 160 residues: Lipoprotein signal peptidase (160 aa).

The next 3 helical transmembrane spans lie at 13 to 33 (IYIT…RLII), 72 to 92 (WFLS…ITKL), and 104 to 124 (SLII…GFVV). Residues Asp-125 and Asp-143 contribute to the active site. The chain crosses the membrane as a helical span at residues 134–154 (WHFATFNIADCSIFIGIIILM).

This sequence belongs to the peptidase A8 family.

Its subcellular location is the cell inner membrane. It carries out the reaction Release of signal peptides from bacterial membrane prolipoproteins. Hydrolyzes -Xaa-Yaa-Zaa-|-(S,diacylglyceryl)Cys-, in which Xaa is hydrophobic (preferably Leu), and Yaa (Ala or Ser) and Zaa (Gly or Ala) have small, neutral side chains.. It participates in protein modification; lipoprotein biosynthesis (signal peptide cleavage). Its function is as follows. This protein specifically catalyzes the removal of signal peptides from prolipoproteins. This Buchnera aphidicola subsp. Acyrthosiphon pisum (strain APS) (Acyrthosiphon pisum symbiotic bacterium) protein is Lipoprotein signal peptidase.